The sequence spans 90 residues: Small ribosomal subunit protein bS16 (90 aa).

The protein belongs to the bacterial ribosomal protein bS16 family.

The chain is Small ribosomal subunit protein bS16 from Streptococcus pneumoniae (strain Hungary19A-6).